The sequence spans 227 residues: Probable methylthioribulose-1-phosphate dehydratase (227 aa).

Cys-87 serves as a coordination point for substrate. Residues His-105 and His-107 each contribute to the Zn(2+) site. Glu-129 acts as the Proton donor/acceptor in catalysis. His-185 contributes to the Zn(2+) binding site.

This sequence belongs to the aldolase class II family. MtnB subfamily. Zn(2+) is required as a cofactor.

The protein localises to the cytoplasm. The catalysed reaction is 5-(methylsulfanyl)-D-ribulose 1-phosphate = 5-methylsulfanyl-2,3-dioxopentyl phosphate + H2O. Its pathway is amino-acid biosynthesis; L-methionine biosynthesis via salvage pathway; L-methionine from S-methyl-5-thio-alpha-D-ribose 1-phosphate: step 2/6. Catalyzes the dehydration of methylthioribulose-1-phosphate (MTRu-1-P) into 2,3-diketo-5-methylthiopentyl-1-phosphate (DK-MTP-1-P). This chain is Probable methylthioribulose-1-phosphate dehydratase, found in Drosophila erecta (Fruit fly).